Consider the following 1513-residue polypeptide: Exo-beta-1,6-galactobiohydrolase (1513 aa).

Residues 1-31 (MRVLSKSLAAMVAAATLVGGGAFAVAGTAYA) form the signal peptide. A Ricin B-type lectin domain is found at 666–801 (VADTTSGDSA…PSANQTWTLR (136 aa)). 2 F5/8 type C domains span residues 965 to 1112 (AIYV…AFVT) and 1116 to 1273 (GAAK…VFAQ). Residues 1456 to 1480 (VAPGPEEQKPGNTNKPGATGNGNKN) are disordered. A compositionally biased stretch (polar residues) spans 1465-1480 (PGNTNKPGATGNGNKN). Residues 1489 to 1509 (VAAIAGAVALLAAAAGALFML) form a helical membrane-spanning segment.

It belongs to the glycosyl hydrolase 30 family.

Its subcellular location is the cell membrane. It carries out the reaction Hydrolysis of (1-&gt;6)-beta-D-galactosidic linkages in arabinogalactan proteins and (1-&gt;3):(1-&gt;6)-beta-galactans to yield (1-&gt;6)-beta-galactobiose as the final product.. Its function is as follows. Involved in the type II arabinogalactan (AG) side chains degradation. Specifically releases the non-reducing terminal beta-1,6-galactobiose (beta-1,6-Gal2) from both dearabinosylated larch AG and polymeric beta-1,6-galactan chains by an exo-mode of action. Shows lower activity with larch AG, and very weak activity with dearabinosylated gum arabic, gum arabic and potato galactan. Can probably release beta-1,6-Gal2 from the internal side chains of type II AG. The sequence is that of Exo-beta-1,6-galactobiohydrolase from Bifidobacterium longum subsp. longum (strain ATCC 15707 / DSM 20219 / JCM 1217 / NCTC 11818 / E194b).